The chain runs to 179 residues: Probable splicing factor, arginine/serine-rich 6 (179 aa).

In terms of domain architecture, RRM spans 3-76 (AKVYVGGLPS…VRARVELSTG (74 aa)). The interval 75–179 (TGQRRGGGGR…RSRSRSASPH (105 aa)) is disordered. A compositionally biased stretch (gly residues) spans 78-93 (RRGGGGRGGGFGGRGG). The segment covering 94 to 160 (GGRDRSPYRG…RSPQERDRSH (67 aa)) has biased composition (basic and acidic residues). A compositionally biased stretch (basic residues) spans 161–173 (SKSRSRSRSRSRS).

Belongs to the splicing factor SR family. Post-translationally, extensively phosphorylated on serine residues in the RS domain.

The protein resides in the nucleus. Its function is as follows. Plays a functionally redundant role in shifting germ cell sexual differentiation in hermaprodites. Required for the development of somatic gonad structures and for progression from larval stage to adulthood. The sequence is that of Probable splicing factor, arginine/serine-rich 6 (rsp-6) from Caenorhabditis elegans.